We begin with the raw amino-acid sequence, 74 residues long: ATP synthase subunit c (74 aa).

2 helical membrane-spanning segments follow: residues 8 to 28 and 52 to 72; these read FIGIGLMAIGMYGAALGVSNI and IGAGLAEAMGLFSFVIAMLLI.

It belongs to the ATPase C chain family. As to quaternary structure, F-type ATPases have 2 components, F(1) - the catalytic core - and F(0) - the membrane proton channel. F(1) has five subunits: alpha(3), beta(3), gamma(1), delta(1), epsilon(1). F(0) has three main subunits: a(1), b(2) and c(10-14). The alpha and beta chains form an alternating ring which encloses part of the gamma chain. F(1) is attached to F(0) by a central stalk formed by the gamma and epsilon chains, while a peripheral stalk is formed by the delta and b chains.

The protein localises to the cell inner membrane. F(1)F(0) ATP synthase produces ATP from ADP in the presence of a proton or sodium gradient. F-type ATPases consist of two structural domains, F(1) containing the extramembraneous catalytic core and F(0) containing the membrane proton channel, linked together by a central stalk and a peripheral stalk. During catalysis, ATP synthesis in the catalytic domain of F(1) is coupled via a rotary mechanism of the central stalk subunits to proton translocation. In terms of biological role, key component of the F(0) channel; it plays a direct role in translocation across the membrane. A homomeric c-ring of between 10-14 subunits forms the central stalk rotor element with the F(1) delta and epsilon subunits. The polypeptide is ATP synthase subunit c (Rickettsia felis (strain ATCC VR-1525 / URRWXCal2) (Rickettsia azadi)).